Reading from the N-terminus, the 664-residue chain is Metal-nicotianamine transporter YSL2 (664 aa).

14 consecutive transmembrane segments (helical) span residues 31–51 (ITVRAIVASLLIGIVYSVICL), 55–75 (LTTGLVPNLNISSALLAFVFL), 103–123 (CAVACYSISLAGGFASYLLGL), 147–167 (GVGWMTSFLFVTSFIGLVVLV), 209–229 (GFIKSFGLSFFWAFFGWFYSG), 268–288 (LVNLSLLFGAILSWGIMWPLI), 314–334 (FICIALILGDGLYNFVKILFF), 378–398 (IPLWMACVGYLFFSLVSIIAI), 409–429 (FVLVAYLLAPSLSFCNAYGAG), 457–477 (VVAGMVACGLIKSIVSVSADL), 496–516 (VAQAIGTAIGCVVAPLTFFLF), 549–569 (SALPKHCLELCYGFFAFAVAA), 594–614 (FLVGGSFAIDMCIGSLVVYVW), and 629–649 (VASGLICGDGLWILPSSLLAL).

The protein belongs to the YSL (TC 2.A.67.2) family. In terms of tissue distribution, expressed in roots, leaves and weakly in shoots. Restricted to the veins, to the central cylinder of the young roots and to the pericycle and the endodermis cells facing the meta-xylem tubes in older roots. Expressed in the vasculature of sepals, petals, anthers, stigma and siliques, but not in developing seeds or in meristematic zones.

The protein localises to the cell membrane. In terms of biological role, may be involved in the lateral transport of nicotianamine-chelated metals in the vasculature. This is Metal-nicotianamine transporter YSL2 (YSL2) from Arabidopsis thaliana (Mouse-ear cress).